We begin with the raw amino-acid sequence, 362 residues long: Outer membrane porin F (362 aa).

The first 22 residues, 1–22 (MMKRNILAVIVPALLVAGTANA), serve as a signal peptide directing secretion. The chain crosses the membrane as a beta stranded span at residues 23-28 (AEIYNK). A topological domain (periplasmic) is located at residue Asp29. The chain crosses the membrane as a beta stranded span at residues 30 to 45 (GNKVDLYGKAVGLHYF). Over 46-60 (SKGNGENSYGGNGDM) the chain is Extracellular. The beta stranded transmembrane segment at 61–73 (TYARLGFKGETQI) threads the bilayer. Topologically, residues 74–75 (NS) are periplasmic. A beta stranded transmembrane segment spans residues 76 to 88 (DLTGYGQWEYNFQ). The Extracellular portion of the chain corresponds to 89 to 104 (GNNSEGADAQTGNKTR). The beta stranded transmembrane segment at 105-113 (LAFAGLKYA) threads the bilayer. Over 114–115 (DV) the chain is Periplasmic. A beta stranded transmembrane segment spans residues 116–122 (GSFDYGR). Topologically, residues 123-156 (NYGVVYDALGYTDMLPEFGGDTAYSDDFFVGRVG) are extracellular. Residues 157–163 (GVATYRN) traverse the membrane as a beta stranded segment. The Periplasmic segment spans residues 164–171 (SNFFGLVD). The chain crosses the membrane as a beta stranded span at residues 172–181 (GLNFAVQYLG). Residues 182–193 (KNERDTARRSNG) lie on the Extracellular side of the membrane. A beta stranded transmembrane segment spans residues 194 to 204 (DGVGGSISYEY). A topological domain (periplasmic) is located at residue Glu205. Residues 206 to 217 (GFGIVGAYGAAD) traverse the membrane as a beta stranded segment. Residues 218–232 (RTNLQEAQPLGNGKK) are Extracellular-facing. A beta stranded membrane pass occupies residues 233 to 244 (AEQWATGLKYDA). A topological domain (periplasmic) is located at residue Asn245. A beta stranded transmembrane segment spans residues 246 to 257 (NIYLAANYGETR). Residues 258-274 (NATPITNKFTNTSGFAN) are Extracellular-facing. The beta stranded transmembrane segment at 275–287 (KTQDVLLVAQYQF) threads the bilayer. The Periplasmic portion of the chain corresponds to 288-289 (DF). Residues 290–303 (GLRPSIAYTKSKAK) form a beta stranded membrane-spanning segment. The Extracellular portion of the chain corresponds to 304–313 (DVEGIGDVDL). A beta stranded membrane pass occupies residues 314–325 (VNYFEVGATYYF). Residues 326–327 (NK) lie on the Periplasmic side of the membrane. Residues 328-337 (NMSTYVDYII) form a beta stranded membrane-spanning segment. Topologically, residues 338-352 (NQIDSDNKLGVGSDD) are extracellular. Residues 353–362 (TVAVGIVYQF) traverse the membrane as a beta stranded segment.

It belongs to the Gram-negative porin family. As to quaternary structure, homotrimer. Forms mixed heterotrimers with OmpC and with PhoE; other mixed heterotrimers are also probable. (Microbial infection) Trimeric complexes with colicin E3, BtuB and OmpF can be cross-linked and immunoprecipitated.

The protein localises to the cell outer membrane. Forms pores that allow passive diffusion of small molecules across the outer membrane. In terms of biological role, (Microbial infection) It is also a receptor for the bacteriophage T2. Is the major receptor for colicin E5. Its function is as follows. (Microbial infection) Probably translocates colicin E3 (and other A-type colicins) across the outer membrane. Functionally, (Microbial infection) A mixed OmpC-OmpF heterotrimer is the outer membrane receptor for toxin CdiA-EC536 (ECL_04451); polymorphisms in extracellular loops 4 and 5 of OmpC confer susceptibility to CdiA-EC536-mediated toxicity. This is Outer membrane porin F (ompF) from Escherichia coli (strain K12).